A 1025-amino-acid chain; its full sequence is Rho GTPase-activating protein Graf (1025 aa).

Residues I271–P388 form the PH domain. Positions Y402–F589 constitute a Rho-GAP domain. The tract at residues G824–S866 is disordered. Low complexity predominate over residues T854–S866. Residues T963 to P1023 form the SH3 domain.

In terms of assembly, interacts with Egfr (when ubiquitinated). In terms of tissue distribution, in the adult brain, expressed in the antennal lobe, the subesophageal ganglion and the alpha/beta neurons of the mushroom body.

The protein localises to the cytoplasm. It is found in the cytosol. The protein resides in the cytoplasmic vesicle. Functionally, GTPase-activating protein for Rho family proteins. Essential component of the CLIC (clathrin-independent carrier)/GEEC (GPI-anchored protein-enriched early endocytic compartment) endocytic pathway. During hematopoiesis, inhibits Egfr-ras-MAPK signaling by promoting Spi-induced Egfr internalization through CLIC/GEEC endocytosis, thereby preventing plasmatocyte overproliferation. Essential for normal mushroom body (MB) development and consequently the formation of olfactory long-term memories. During MD development, required to stop the MB beta-lobe from crossing the brain midline, possibly acting via its role in the CLIC/GEEC endocytic pathway to down-regulate the Egfr-ras-MAPK signaling at the tip of the beta-lobes. Required during embryo cellularization for maintaining and regulating the rate of actomyosin ring constriction. During cellularization, inhibits Rho-GTP levels at the furrow canal tip in a spatiotemporal manner, thus delaying the onset of actomyosin contraction and ensuring appropriate closure of the cells at the base of nuclei after membrane extension. The protein is Rho GTPase-activating protein Graf of Drosophila melanogaster (Fruit fly).